We begin with the raw amino-acid sequence, 181 residues long: NADH-quinone oxidoreductase subunit B (181 aa).

C45, C46, C111, and C140 together coordinate [4Fe-4S] cluster.

The protein belongs to the complex I 20 kDa subunit family. In terms of assembly, NDH-1 is composed of 14 different subunits. Subunits NuoB, C, D, E, F, and G constitute the peripheral sector of the complex. Requires [4Fe-4S] cluster as cofactor.

The protein localises to the cell inner membrane. The catalysed reaction is a quinone + NADH + 5 H(+)(in) = a quinol + NAD(+) + 4 H(+)(out). Its function is as follows. NDH-1 shuttles electrons from NADH, via FMN and iron-sulfur (Fe-S) centers, to quinones in the respiratory chain. The immediate electron acceptor for the enzyme in this species is believed to be a menaquinone. Couples the redox reaction to proton translocation (for every two electrons transferred, four hydrogen ions are translocated across the cytoplasmic membrane), and thus conserves the redox energy in a proton gradient. The chain is NADH-quinone oxidoreductase subunit B from Flavobacterium psychrophilum (strain ATCC 49511 / DSM 21280 / CIP 103535 / JIP02/86).